We begin with the raw amino-acid sequence, 176 residues long: Protein FimF (176 aa).

Residues 1-20 (MRNKPFYLLCAFLWLAVSHA) form the signal peptide. Cys38 and Cys78 form a disulfide bridge.

Belongs to the fimbrial protein family.

The protein resides in the fimbrium. Functionally, involved in regulation of length and mediation of adhesion of type 1 fimbriae (but not necessary for the production of fimbriae). Involved in the integration of FimH in the fimbriae. This chain is Protein FimF (fimF), found in Escherichia coli (strain K12).